The following is a 984-amino-acid chain: Hyaluronate lyase (984 aa).

Composition is skewed to polar residues over residues 1–12 (MKQVVDNQTQNK), 19–32 (DFNQTNPVSGSWSH), and 54–66 (IQRTEQGQVSLSS). Disordered stretches follow at residues 1–32 (MKQVVDNQTQNKELVKNGDFNQTNPVSGSWSH) and 49–68 (DKSPIIQRTEQGQVSLSSDK). A signal peptide spans 1–40 (MKQVVDNQTQNKELVKNGDFNQTNPVSGSWSHTSAREWSA). Active-site residues include Asn429, His479, and Tyr488. Residues 701 to 726 (TEKDAKREDTTKEFMSKHSKDAKEKT) are compositionally biased toward basic and acidic residues. Residues 701 to 728 (TEKDAKREDTTKEFMSKHSKDAKEKTGQ) form a disordered region.

Belongs to the polysaccharide lyase 8 family.

The protein localises to the secreted. The catalysed reaction is [hyaluronan](n) = n 3-(4-deoxy-beta-D-gluc-4-enuronosyl)-N-acetyl-D-glucosamine + H2O. The polypeptide is Hyaluronate lyase (Streptococcus agalactiae serotype III (strain NEM316)).